The chain runs to 455 residues: Gamma-glutamyl phosphate reductase (455 aa).

The protein belongs to the gamma-glutamyl phosphate reductase family.

It is found in the cytoplasm. It carries out the reaction L-glutamate 5-semialdehyde + phosphate + NADP(+) = L-glutamyl 5-phosphate + NADPH + H(+). It functions in the pathway amino-acid biosynthesis; L-proline biosynthesis; L-glutamate 5-semialdehyde from L-glutamate: step 2/2. In terms of biological role, catalyzes the NADPH-dependent reduction of L-glutamate 5-phosphate into L-glutamate 5-semialdehyde and phosphate. The product spontaneously undergoes cyclization to form 1-pyrroline-5-carboxylate. In Synechococcus sp. (strain JA-3-3Ab) (Cyanobacteria bacterium Yellowstone A-Prime), this protein is Gamma-glutamyl phosphate reductase.